A 267-amino-acid chain; its full sequence is Malonyl-[acyl-carrier protein] O-methyltransferase (267 aa).

It belongs to the methyltransferase superfamily.

It catalyses the reaction malonyl-[ACP] + S-adenosyl-L-methionine = malonyl-[ACP] methyl ester + S-adenosyl-L-homocysteine. It functions in the pathway cofactor biosynthesis; biotin biosynthesis. Functionally, converts the free carboxyl group of a malonyl-thioester to its methyl ester by transfer of a methyl group from S-adenosyl-L-methionine (SAM). It allows to synthesize pimeloyl-ACP via the fatty acid synthetic pathway. The polypeptide is Malonyl-[acyl-carrier protein] O-methyltransferase (Geobacter sulfurreducens (strain ATCC 51573 / DSM 12127 / PCA)).